We begin with the raw amino-acid sequence, 163 residues long: Neurotrophin-3 (163 aa).

The signal sequence occupies residues 1 to 3 (IQS). The propeptide occupies 4–119 (TSMDQGILTE…VLNRTSRRKR (116 aa)). Asparagine 112 carries an N-linked (GlcNAc...) asparagine glycan.

Belongs to the NGF-beta family.

The protein resides in the secreted. Seems to promote the survival of visceral and proprioceptive sensory neurons. This Chilabothrus striatus (Haitian boa constrictor) protein is Neurotrophin-3 (NTF3).